Consider the following 214-residue polypeptide: Vascular endothelial growth factor A (214 aa).

A signal peptide spans Met1 to Ala26. Disulfide bonds link Cys51–Cys93, Cys82–Cys127, and Cys86–Cys129. The N-linked (GlcNAc...) asparagine glycan is linked to Asn100. The span at Pro131–Ser142 shows a compositional bias: basic and acidic residues. Residues Pro131–Trp162 are disordered. The span at Ile143 to Tyr159 shows a compositional bias: basic residues.

This sequence belongs to the PDGF/VEGF growth factor family. Homodimer; disulfide-linked. Also found as heterodimer with PGF. Interacts with NRP1. Interacts with BSG. Interacts with CD82; this interaction inhibits VEGFA-mediated signaling pathway.

It is found in the secreted. Functionally, growth factor active in angiogenesis, vasculogenesis and endothelial cell growth. Induces endothelial cell proliferation, promotes cell migration, inhibits apoptosis and induces permeabilization of blood vessels. Binds to the FLT1/VEGFR1 and KDR/VEGFR2 receptors, heparan sulfate and heparin. Binding to NRP1 receptor initiates a signaling pathway needed for motor neuron axon guidance and cell body migration, including for the caudal migration of facial motor neurons from rhombomere 4 to rhombomere 6 during embryonic development. Also binds the DEAR/FBXW7-AS1 receptor. In Canis lupus familiaris (Dog), this protein is Vascular endothelial growth factor A (VEGFA).